A 482-amino-acid polypeptide reads, in one-letter code: Anaerobic nitric oxide reductase flavorubredoxin (482 aa).

Positions 30–210 (LRGSSYNSYL…PFSRLVTPKI (181 aa)) are zinc metallo-hydrolase. Fe cation-binding residues include His-79, Glu-81, Asp-83, His-147, Asp-166, and His-227. The Flavodoxin-like domain maps to 254–393 (ITIFYDTMSN…LCRQHGRDIA (140 aa)). FMN contacts are provided by residues 260–264 (TMSNN) and 342–369 (AFGSHGWSGGAVDRLSTRLQDAGFEMSL). In terms of domain architecture, Rubredoxin-like spans 426-477 (GPMMQCSVCQWVYDPAKGEPNQDVQPGTPWSEVPDNFLCPECSLGKDVFDVL). The Fe cation site is built by Cys-431, Cys-434, Cys-464, and Cys-467.

It in the N-terminal section; belongs to the zinc metallo-hydrolase group 3 family. As to quaternary structure, homotetramer. Requires Fe cation as cofactor. FMN is required as a cofactor.

Its subcellular location is the cytoplasm. It functions in the pathway nitrogen metabolism; nitric oxide reduction. Functionally, anaerobic nitric oxide reductase; uses NADH to detoxify nitric oxide (NO), protecting several 4Fe-4S NO-sensitive enzymes. Has at least 2 reductase partners, only one of which (NorW, flavorubredoxin reductase) has been identified. NO probably binds to the di-iron center; electrons enter from the NorW at rubredoxin and are transferred sequentially to the FMN center and the di-iron center. Also able to function as an aerobic oxygen reductase. The protein is Anaerobic nitric oxide reductase flavorubredoxin of Klebsiella pneumoniae subsp. pneumoniae (strain ATCC 700721 / MGH 78578).